The primary structure comprises 898 residues: MENAGPDAPVRLTPMMEQYIEIKAANVDSLLFYRMGDFYELFFDDAVAASAALGITLTKRGKHLGEDIPMCGVPVHAADDYLQKLIAKGYRVAVCEQVEDPAEAKKRGSKSVVKRDVIRLVTPGTLTEEKLLDPAQANFLMAMGRTRGDGALALAWIDISTGTFRVAETTPDRLFADIMRVDPRELVVADSAFHDEELRPVFDLIGKAVTPQPATLFDSAAAQTRIQHYFNVATLDGFGQFSRPELSAISGAIAYIEKTQISERPPLMRPEREHEGGTLFIDPATRASLELARTMSGKRDGSLLKAIDRTVTGGGARLLAERLTAPLTSPKEIAPRLDSVSWCLSEQTLCEALRLELKGVPDMPRALSRLAVGRGGPRDLGALACGFEAAGGIASLLDGALLPDELAAAREAIEKMPAGFAAHLDRALADELPLLKRDGGFVREGYNSELDEMRALRDQSRRVIAGLQADYIEETGIKSLKIKHNNVLGYFIEVTANNSGAMTDTDEAKSRFIHRQTMANAMRFTTTELAELESKIANAADRALSIELAIFEELTAEAVAHADSIRAAASALSVFDVSTALAVLAEEQGYCRPHVDDSLSFNIVAGRHPVVEQALRRQAANPFVANDCDLSPQRDGGDGAIWLLTGPNMGGKSTFLRQNALIAILAQMGSFVPAGSAHIGVVDRLFSRVGASDDLARGRSTFMVEMVETAAILNQAGEHSLVILDEIGRGTATFDGLSIAWAAVEYLHEKNRCRALFATHFHEMTALSEKLERLSNVTMRVKEWDNDVIFLHEVAKGAADRSYGVQVARLAGLPEAVVNRARDVLHQLEAGETSGKADRLIDDLPLFSVMLQQEKPKPQIQAKDSELANAVAAISPDELTPREALDLIYKLKELAGKA.

ATP is bound at residue 646 to 653 (GPNMGGKS).

This sequence belongs to the DNA mismatch repair MutS family.

Functionally, this protein is involved in the repair of mismatches in DNA. It is possible that it carries out the mismatch recognition step. This protein has a weak ATPase activity. The protein is DNA mismatch repair protein MutS of Brucella ovis (strain ATCC 25840 / 63/290 / NCTC 10512).